The following is a 306-amino-acid chain: D-alanine--D-alanine ligase (306 aa).

Active-site residues include Glu-15 and Ser-150. The ATP-grasp domain occupies 101-303; sequence KLLWKSLSLR…FDELILKILK (203 aa). 134 to 189 serves as a coordination point for ATP; the sequence is ILKLKFPVVIKPNNAGSSIGITIVNHPDLLIDSINLAFNYSNNIIIEKFLKGTEYT. Mg(2+)-binding residues include Asp-257, Glu-270, and Asn-272. Residue Ser-281 is part of the active site.

Belongs to the D-alanine--D-alanine ligase family. The cofactor is Mg(2+). Mn(2+) is required as a cofactor.

Its subcellular location is the cytoplasm. The catalysed reaction is 2 D-alanine + ATP = D-alanyl-D-alanine + ADP + phosphate + H(+). Its pathway is cell wall biogenesis; peptidoglycan biosynthesis. Its function is as follows. Cell wall formation. The chain is D-alanine--D-alanine ligase from Buchnera aphidicola subsp. Schizaphis graminum (strain Sg).